The primary structure comprises 236 residues: Phosphoribosylaminoimidazole-succinocarboxamide synthase (236 aa).

Belongs to the SAICAR synthetase family.

The catalysed reaction is 5-amino-1-(5-phospho-D-ribosyl)imidazole-4-carboxylate + L-aspartate + ATP = (2S)-2-[5-amino-1-(5-phospho-beta-D-ribosyl)imidazole-4-carboxamido]succinate + ADP + phosphate + 2 H(+). The protein operates within purine metabolism; IMP biosynthesis via de novo pathway; 5-amino-1-(5-phospho-D-ribosyl)imidazole-4-carboxamide from 5-amino-1-(5-phospho-D-ribosyl)imidazole-4-carboxylate: step 1/2. The polypeptide is Phosphoribosylaminoimidazole-succinocarboxamide synthase (Rickettsia bellii (strain OSU 85-389)).